Consider the following 788-residue polypeptide: Endonuclease MutS2 (788 aa).

332–339 (GPNTGGKT) lines the ATP pocket. The Smr domain maps to 713–788 (VDLRGMDAEE…GTGVTVVELK (76 aa)).

The protein belongs to the DNA mismatch repair MutS family. MutS2 subfamily. As to quaternary structure, homodimer. Binds to stalled ribosomes, contacting rRNA.

Endonuclease that is involved in the suppression of homologous recombination and thus may have a key role in the control of bacterial genetic diversity. Its function is as follows. Acts as a ribosome collision sensor, splitting the ribosome into its 2 subunits. Detects stalled/collided 70S ribosomes which it binds and splits by an ATP-hydrolysis driven conformational change. Acts upstream of the ribosome quality control system (RQC), a ribosome-associated complex that mediates the extraction of incompletely synthesized nascent chains from stalled ribosomes and their subsequent degradation. Probably generates substrates for RQC. In Clostridium botulinum (strain Langeland / NCTC 10281 / Type F), this protein is Endonuclease MutS2.